We begin with the raw amino-acid sequence, 409 residues long: Nucleoprotein (409 aa).

4 disordered regions span residues 1–32, 46–68, 164–196, and 238–258; these read MASG…SSGN, IPPP…SQQH, RSGR…EDDL, and VDQV…DDKM. Positions 15–31 are enriched in low complexity; it reads PVIKLGGPKPPKVGSSG. Positions 29-160 are RNA-binding; sequence SSGNASWFQA…GNFRWDFIPL (132 aa). The CoV N NTD domain occupies 31–156; that stretch reads GNASWFQAIK…GGPDGNFRWD (126 aa). Over residues 166-179 the composition is skewed to low complexity; the sequence is GRSTAASSAASSRA. 2 stretches are compositionally biased toward basic and acidic residues: residues 180–192 and 247–258; these read PSRE…RSGS and KGKEGNFGDDKM. Residues Ser190 and Ser192 each carry the phosphoserine; by host modification. The region spanning 215-331 is the CoV N CTD domain; that stretch reads TKAKADEMAH…QCVDGVGTRP (117 aa). Residues 226–333 are dimerization; it reads RYCKRTIPPN…VDGVGTRPKD (108 aa). An intrachain disulfide couples Cys320 to Cys323. The segment at 326–409 is disordered; that stretch reads GVGTRPKDDE…GDAALGENEL (84 aa). The segment covering 358-367 has biased composition (basic residues); it reads QRPKKEKKPK. Residues 368-384 show a composition bias toward basic and acidic residues; sequence KHDDEVDKALTSDEERN. Position 378 is a phosphothreonine; by host (Thr378). Position 379 is a phosphoserine; by host (Ser379).

It belongs to the gammacoronavirus nucleocapsid protein family. As to quaternary structure, homooligomer. Both monomeric and oligomeric forms interact with RNA. Interacts with protein M. Interacts with NSP3; this interaction serves to tether the genome to the newly translated replicase-transcriptase complex at a very early stage of infection. Post-translationally, ADP-ribosylated. The ADP-ribosylation is retained in the virion during infection. In terms of processing, phosphorylated on serine and threonine residues.

Its subcellular location is the virion. It is found in the host endoplasmic reticulum-Golgi intermediate compartment. The protein resides in the host Golgi apparatus. Its function is as follows. Packages the positive strand viral genome RNA into a helical ribonucleocapsid (RNP) and plays a fundamental role during virion assembly through its interactions with the viral genome and membrane protein M. Plays an important role in enhancing the efficiency of subgenomic viral RNA transcription as well as viral replication. The chain is Nucleoprotein from Avian infectious bronchitis virus (strain M41) (IBV).